The following is a 78-amino-acid chain: Acyl carrier protein (78 aa).

The 76-residue stretch at 2-77 folds into the Carrier domain; sequence STIEERVKKI…AAIDYVKAHQ (76 aa). O-(pantetheine 4'-phosphoryl)serine is present on serine 37.

Belongs to the acyl carrier protein (ACP) family. Post-translationally, 4'-phosphopantetheine is transferred from CoA to a specific serine of apo-ACP by AcpS. This modification is essential for activity because fatty acids are bound in thioester linkage to the sulfhydryl of the prosthetic group.

Its subcellular location is the cytoplasm. Its pathway is lipid metabolism; fatty acid biosynthesis. Carrier of the growing fatty acid chain in fatty acid biosynthesis. The sequence is that of Acyl carrier protein from Pseudomonas putida (strain ATCC 47054 / DSM 6125 / CFBP 8728 / NCIMB 11950 / KT2440).